We begin with the raw amino-acid sequence, 56 residues long: uncharacterized protein (56 aa).

This is an uncharacterized protein from Schizosaccharomyces pombe (strain 972 / ATCC 24843) (Fission yeast).